The chain runs to 108 residues: Small ribosomal subunit protein bS6 (108 aa).

Belongs to the bacterial ribosomal protein bS6 family.

Functionally, binds together with bS18 to 16S ribosomal RNA. This Trichormus variabilis (strain ATCC 29413 / PCC 7937) (Anabaena variabilis) protein is Small ribosomal subunit protein bS6.